Reading from the N-terminus, the 416-residue chain is MSQIAILSVNHQLVPVEVREKVAFTPDKLIQALNNLHHIDGIDACIILSTCNRVEIYVASNHKNSEELLSNYLAKTHNIKRDIIDSYLNYFEGNEALTHLCNVATGLDSLVLGEPQILGQLKNAYHIAKEVKTLNKLLEKLFQHTFSTAKKVRTNTQIGASPVSIAYCAVKLSEKIFEQLSEQTVLLIGAGEMIELCAHYLNQKGVNKMIVANRTIENAKKIAHLYQAQSIGLKQFSSFVYKADIIISSTAASMPIIGKGLIESALKKRKHKPIFMLDIAIPRDIEPEVGQLDDVYLYTIDDLGQVVNDNIGNREKEKGLAQEIIVKQNQVFNKWLDTIPNEQMVQSYQFGANSIKNELLEKAIKQLKNGANSEDTIRKLADQLANKLLHLPFKNIKQTSIENLSQCEGCIPYIKN.

Residues 50–53, serine 109, 114–116, and glutamine 120 each bind substrate; these read TCNR and EPQ. Cysteine 51 functions as the Nucleophile in the catalytic mechanism. 189 to 194 lines the NADP(+) pocket; that stretch reads GAGEMI.

It belongs to the glutamyl-tRNA reductase family. In terms of assembly, homodimer.

The catalysed reaction is (S)-4-amino-5-oxopentanoate + tRNA(Glu) + NADP(+) = L-glutamyl-tRNA(Glu) + NADPH + H(+). It participates in porphyrin-containing compound metabolism; protoporphyrin-IX biosynthesis; 5-aminolevulinate from L-glutamyl-tRNA(Glu): step 1/2. In terms of biological role, catalyzes the NADPH-dependent reduction of glutamyl-tRNA(Glu) to glutamate 1-semialdehyde (GSA). The polypeptide is Glutamyl-tRNA reductase (Ruthia magnifica subsp. Calyptogena magnifica).